Reading from the N-terminus, the 380-residue chain is E3 ubiquitin-protein ligase Iruka (380 aa).

A disordered region spans residues alanine 50–asparagine 92. Composition is skewed to low complexity over residues serine 55–serine 68 and serine 74–serine 89. The RING-type; atypical zinc-finger motif lies at cysteine 253–arginine 294. The interval glutamate 317–asparagine 367 is disordered. Residues asparagine 338–alanine 350 show a composition bias toward low complexity.

Interacts (via N-terminus) with CG7546 (via Ubl domain).

It catalyses the reaction S-ubiquitinyl-[E2 ubiquitin-conjugating enzyme]-L-cysteine + [acceptor protein]-L-lysine = [E2 ubiquitin-conjugating enzyme]-L-cysteine + N(6)-ubiquitinyl-[acceptor protein]-L-lysine.. The protein operates within protein modification; protein ubiquitination. In terms of biological role, E3 ubiquitin-protein ligase that mediates E2-dependent, 'Lys-48'- and/or 'Lys-63'-linked polyubiquitination of substrates. Recognizes miRNA-empty Ago1 and triggers its degradation via polyubiquitination independently of the Bag6 complex. By targeting miRNA-empty Ago1, eliminates dysfunctional Ago1 not able to bind miRNA and thereby plays a role in the quality control of miRNA-mediated silencing. The protein is E3 ubiquitin-protein ligase Iruka of Drosophila melanogaster (Fruit fly).